The primary structure comprises 358 residues: uncharacterized protein (358 aa).

Zn(2+)-binding residues include Cys39, His61, Cys92, Cys95, Cys98, Cys106, and Asp157.

It belongs to the zinc-containing alcohol dehydrogenase family. Requires Zn(2+) as cofactor.

This is an uncharacterized protein from Escherichia coli (strain K12).